We begin with the raw amino-acid sequence, 465 residues long: MTALFQQLPSVDKILKTPQGEQLVTEFGHSAVVNCCRHLLAQAREKIKIEKKLPHFFTDFNHTIAEVNRYLANQQQVKIKSVHNLTGTVLHTNLGRALWAQSAQQAALTAMRQNVALEYDLEAGKRSHRDNYVSELLHELTGAQAACVVNNNAAAVLLMLATFAQGKEVIISRGELIEIGGAFRIPDIMAQAGCKLVEVGTTNRTHLNDYRRAINENTALLMKVHSSNYQICGFTCEVSEQELVELGKEFNIPVVTDLGSGALTDLSRYDLPKEPTVQEKLVQGADLISFSGDKLLGGPQAGIIVGKKELIQQLQSHPLKRVLRCDKVILAAMEATLRLYLQPEKLTEKLTSLRLLTQPLEQLRQQAEQLKAKLENLLKDDFLLQIESSLAQIGSGSQPMAKIPSIAVTIAEKNSEKLTALLARFKKLSTPIIARVENDKIRLDLRSVTAIETLLITLEELNQDQ.

Lys294 bears the N6-(pyridoxal phosphate)lysine mark.

Belongs to the SelA family. Pyridoxal 5'-phosphate serves as cofactor.

Its subcellular location is the cytoplasm. It carries out the reaction L-seryl-tRNA(Sec) + selenophosphate + H(+) = L-selenocysteinyl-tRNA(Sec) + phosphate. It functions in the pathway aminoacyl-tRNA biosynthesis; selenocysteinyl-tRNA(Sec) biosynthesis; selenocysteinyl-tRNA(Sec) from L-seryl-tRNA(Sec) (bacterial route): step 1/1. Functionally, converts seryl-tRNA(Sec) to selenocysteinyl-tRNA(Sec) required for selenoprotein biosynthesis. This Mannheimia succiniciproducens (strain KCTC 0769BP / MBEL55E) protein is L-seryl-tRNA(Sec) selenium transferase.